Reading from the N-terminus, the 126-residue chain is Holo-[acyl-carrier-protein] synthase (126 aa).

D9 and E57 together coordinate Mg(2+).

It belongs to the P-Pant transferase superfamily. AcpS family. Requires Mg(2+) as cofactor.

It localises to the cytoplasm. The catalysed reaction is apo-[ACP] + CoA = holo-[ACP] + adenosine 3',5'-bisphosphate + H(+). Its function is as follows. Transfers the 4'-phosphopantetheine moiety from coenzyme A to a Ser of acyl-carrier-protein. The sequence is that of Holo-[acyl-carrier-protein] synthase from Idiomarina loihiensis (strain ATCC BAA-735 / DSM 15497 / L2-TR).